Reading from the N-terminus, the 1172-residue chain is DNA-directed RNA polymerase subunit beta (1172 aa).

This sequence belongs to the RNA polymerase beta chain family. In terms of assembly, the RNAP catalytic core consists of 2 alpha, 1 beta, 1 beta' and 1 omega subunit. When a sigma factor is associated with the core the holoenzyme is formed, which can initiate transcription.

The enzyme catalyses RNA(n) + a ribonucleoside 5'-triphosphate = RNA(n+1) + diphosphate. In terms of biological role, DNA-dependent RNA polymerase catalyzes the transcription of DNA into RNA using the four ribonucleoside triphosphates as substrates. This is DNA-directed RNA polymerase subunit beta from Mycobacterium sp. (strain KMS).